A 128-amino-acid polypeptide reads, in one-letter code: Large ribosomal subunit protein bL19 (128 aa).

It belongs to the bacterial ribosomal protein bL19 family.

This protein is located at the 30S-50S ribosomal subunit interface and may play a role in the structure and function of the aminoacyl-tRNA binding site. The protein is Large ribosomal subunit protein bL19 of Azoarcus sp. (strain BH72).